A 331-amino-acid polypeptide reads, in one-letter code: Sulfate/thiosulfate import ATP-binding protein CysA (331 aa).

In terms of domain architecture, ABC transporter spans 2 to 232 (ITVTNARKNY…PANEFVMSFL (231 aa)). 34-41 (GPSGSGKS) contacts ATP.

It belongs to the ABC transporter superfamily. Sulfate/tungstate importer (TC 3.A.1.6) family. The complex is composed of two ATP-binding proteins (CysA), two transmembrane proteins (CysT and CysW) and a solute-binding protein (CysP).

It localises to the cell membrane. The enzyme catalyses sulfate(out) + ATP + H2O = sulfate(in) + ADP + phosphate + H(+). It carries out the reaction thiosulfate(out) + ATP + H2O = thiosulfate(in) + ADP + phosphate + H(+). Its function is as follows. Part of the ABC transporter complex CysAWTP involved in sulfate/thiosulfate import. Responsible for energy coupling to the transport system. The polypeptide is Sulfate/thiosulfate import ATP-binding protein CysA (Nocardia farcinica (strain IFM 10152)).